The primary structure comprises 123 residues: Holo-[acyl-carrier-protein] synthase (123 aa).

Mg(2+) is bound by residues D8 and E56.

This sequence belongs to the P-Pant transferase superfamily. AcpS family. Requires Mg(2+) as cofactor.

It is found in the cytoplasm. The catalysed reaction is apo-[ACP] + CoA = holo-[ACP] + adenosine 3',5'-bisphosphate + H(+). Transfers the 4'-phosphopantetheine moiety from coenzyme A to a Ser of acyl-carrier-protein. The protein is Holo-[acyl-carrier-protein] synthase of Clostridium beijerinckii (strain ATCC 51743 / NCIMB 8052) (Clostridium acetobutylicum).